We begin with the raw amino-acid sequence, 131 residues long: M-zodatoxin-Lt8m (131 aa).

The signal sequence occupies residues 1–20 (MKYFVVALALVAAFACIAES). The propeptide occupies 21 to 60 (KPAESEHELAEVEEENELADLEDAVWLEHLADLSDLEEAR).

Belongs to the cationic peptide 06 (cytoinsectotoxin) family. In terms of tissue distribution, expressed by the venom gland.

The protein resides in the secreted. In terms of biological role, insecticidal, cytolytic and antimicrobial peptide. Forms voltage-dependent, ion-permeable channels in membranes. At high concentration causes cell membrane lysis. The chain is M-zodatoxin-Lt8m (cit 1-13) from Lachesana tarabaevi (Spider).